Reading from the N-terminus, the 543-residue chain is CTP synthase (543 aa).

An amidoligase domain region spans residues 1–265 (MTKFIFVTGG…DRLVTDRFRI (265 aa)). S13 is a CTP binding site. Residue S13 participates in UTP binding. Residues 14–19 (SLGKGI) and D71 each bind ATP. Residues D71 and E139 each coordinate Mg(2+). CTP contacts are provided by residues 146 to 148 (DIE), 186 to 191 (KTKPTQ), and K222. Residues 186–191 (KTKPTQ) and K222 contribute to the UTP site. One can recognise a Glutamine amidotransferase type-1 domain in the interval 290–541 (EIAMVGKYVD…VEAASQHKQT (252 aa)). L-glutamine is bound at residue G351. C378 acts as the Nucleophile; for glutamine hydrolysis in catalysis. L-glutamine contacts are provided by residues 379–382 (LGMQ), E402, and R469. Residues H514 and E516 contribute to the active site.

The protein belongs to the CTP synthase family. In terms of assembly, homotetramer.

The catalysed reaction is UTP + L-glutamine + ATP + H2O = CTP + L-glutamate + ADP + phosphate + 2 H(+). It catalyses the reaction L-glutamine + H2O = L-glutamate + NH4(+). It carries out the reaction UTP + NH4(+) + ATP = CTP + ADP + phosphate + 2 H(+). It functions in the pathway pyrimidine metabolism; CTP biosynthesis via de novo pathway; CTP from UDP: step 2/2. With respect to regulation, allosterically activated by GTP, when glutamine is the substrate; GTP has no effect on the reaction when ammonia is the substrate. The allosteric effector GTP functions by stabilizing the protein conformation that binds the tetrahedral intermediate(s) formed during glutamine hydrolysis. Inhibited by the product CTP, via allosteric rather than competitive inhibition. Functionally, catalyzes the ATP-dependent amination of UTP to CTP with either L-glutamine or ammonia as the source of nitrogen. Regulates intracellular CTP levels through interactions with the four ribonucleotide triphosphates. The chain is CTP synthase from Hydrogenovibrio crunogenus (strain DSM 25203 / XCL-2) (Thiomicrospira crunogena).